Here is a 292-residue protein sequence, read N- to C-terminus: GTP cyclohydrolase FolE2 (292 aa).

It belongs to the GTP cyclohydrolase IV family.

It carries out the reaction GTP + H2O = 7,8-dihydroneopterin 3'-triphosphate + formate + H(+). It functions in the pathway cofactor biosynthesis; 7,8-dihydroneopterin triphosphate biosynthesis; 7,8-dihydroneopterin triphosphate from GTP: step 1/1. Its function is as follows. Converts GTP to 7,8-dihydroneopterin triphosphate. The polypeptide is GTP cyclohydrolase FolE2 (Staphylococcus epidermidis (strain ATCC 35984 / DSM 28319 / BCRC 17069 / CCUG 31568 / BM 3577 / RP62A)).